The primary structure comprises 207 residues: LexA repressor (207 aa).

The segment at residues 28 to 48 (RAEIAQKLGFKSANAAEEHLK) is a DNA-binding region (H-T-H motif). Residues S124 and K161 each act as for autocatalytic cleavage activity in the active site.

It belongs to the peptidase S24 family. As to quaternary structure, homodimer.

It catalyses the reaction Hydrolysis of Ala-|-Gly bond in repressor LexA.. Its function is as follows. Represses a number of genes involved in the response to DNA damage (SOS response), including recA and lexA. In the presence of single-stranded DNA, RecA interacts with LexA causing an autocatalytic cleavage which disrupts the DNA-binding part of LexA, leading to derepression of the SOS regulon and eventually DNA repair. In Aeromonas hydrophila subsp. hydrophila (strain ATCC 7966 / DSM 30187 / BCRC 13018 / CCUG 14551 / JCM 1027 / KCTC 2358 / NCIMB 9240 / NCTC 8049), this protein is LexA repressor.